The chain runs to 416 residues: UDP-N-acetylglucosamine 1-carboxyvinyltransferase (416 aa).

Position 22–23 (22–23) interacts with phosphoenolpyruvate; that stretch reads KN. Arginine 91 is a binding site for UDP-N-acetyl-alpha-D-glucosamine. The active-site Proton donor is cysteine 115. 2-(S-cysteinyl)pyruvic acid O-phosphothioketal is present on cysteine 115. Residues aspartate 304 and isoleucine 326 each contribute to the UDP-N-acetyl-alpha-D-glucosamine site.

The protein belongs to the EPSP synthase family. MurA subfamily.

Its subcellular location is the cytoplasm. It carries out the reaction phosphoenolpyruvate + UDP-N-acetyl-alpha-D-glucosamine = UDP-N-acetyl-3-O-(1-carboxyvinyl)-alpha-D-glucosamine + phosphate. Its pathway is cell wall biogenesis; peptidoglycan biosynthesis. In terms of biological role, cell wall formation. Adds enolpyruvyl to UDP-N-acetylglucosamine. This is UDP-N-acetylglucosamine 1-carboxyvinyltransferase from Thermodesulfovibrio yellowstonii (strain ATCC 51303 / DSM 11347 / YP87).